The sequence spans 155 residues: Short-chain-enoyl-CoA hydratase (155 aa).

It belongs to the enoyl-CoA hydratase/isomerase family.

It catalyses the reaction a short-chain (3S)-3-hydroxyacyl-CoA = a short-chain (2E)-enoyl-CoA + H2O. It functions in the pathway lipid metabolism; butanoate metabolism. In Clostridioides difficile (Peptoclostridium difficile), this protein is Short-chain-enoyl-CoA hydratase (crt).